The chain runs to 386 residues: MVEEFKVTPWEVEGVVDYDKLIKHFGTSPLTEDLLEKTAELTKSELPIFFRRKFFFSHRDYDLILKDYEEGRGFFLYTGRGPSGPMHIGHIIPFFATKWLQEKFGVNLYIQITDDEKFLFKENLTFDDTKRWAYDNILDIIAVGFDPDKTFIFQNSEFTKIYEMAIPIAKKINFSMAKAVFGFTEQSKIGMIFFPAIQIAPTFFERKRCLIPAAIDQDPYWRLQRDFAESLGYYKTAALHSKFVPSLTSLSGKMSASKPETAIYLTDSPEDVEKKVWKFTLTGGRPTLKEQREKGGEPEKCVVFKWLEIFFEEDDKKLKERYYACKNGELTCGECKRYLISKIQEFLKEHQRRRKKAEKLVEKFKYTGKLAQEMWNEAIPEPLKRS.

The 'HIGH' region signature appears at P82–H90. The short motif at K253–S257 is the 'KMSKS' region element.

This sequence belongs to the class-I aminoacyl-tRNA synthetase family.

The protein localises to the cytoplasm. It carries out the reaction tRNA(Trp) + L-tryptophan + ATP = L-tryptophyl-tRNA(Trp) + AMP + diphosphate + H(+). This chain is Tryptophan--tRNA ligase, found in Pyrococcus horikoshii (strain ATCC 700860 / DSM 12428 / JCM 9974 / NBRC 100139 / OT-3).